Reading from the N-terminus, the 597-residue chain is Sodium/mannose cotransporter SLC5A10 (597 aa).

Residues 1-16 (MVADNSTSDPHAPGPQ) are Extracellular-facing. Asparagine 5 carries an N-linked (GlcNAc...) asparagine glycan. A helical membrane pass occupies residues 17-37 (LSVTDIVVITVYFALNVAVGI). The Cytoplasmic portion of the chain corresponds to 38–73 (WSSCRASRNTVSGYFLAGRDMTWWPIGASLFGSSEG). Serine 49 bears the Phosphoserine mark. Residues 74–94 (SGLFIGLAGSGAAGGLAVAGF) form a helical membrane-spanning segment. Residues 95-100 (DWNATY) are Extracellular-facing. The helical transmembrane segment at 101–121 (VLLALAWVFGAIYISSEIVTL) threads the bilayer. At 122–137 (AEYIQKRFGGQRIRMY) the chain is on the cytoplasmic side. Residues 138 to 158 (LSVLSLLLSVFTKISLDLYAG) form a helical membrane-spanning segment. Over 159–171 (ALFVHICLGWNFY) the chain is Extracellular. Residues 172 to 194 (LSTILTLTITALYTITGGLVAVI) form a helical membrane-spanning segment. The Cytoplasmic segment spans residues 195 to 200 (YTDALQ). Residues 201 to 219 (TLIMVVGAVILAIKAFHQI) traverse the membrane as a helical segment. Residues 220–265 (DGYGQMEAAYARAIPSRTVANTTCHLPRADAMHMFRDPYTGDLPWT) lie on the Extracellular side of the membrane. A helical membrane pass occupies residues 266–286 (GMTFGLTIMATWYWCTDQVIV). Residues 287–301 (QRSLSARNLNHAKAG) are Cytoplasmic-facing. The helical transmembrane segment at 302–322 (SILASYLKMLPMGLMIMPGMI) threads the bilayer. The Extracellular segment spans residues 323 to 367 (SRALFPDEVGCVVPSECLRACGAEIGCSNIAYPKLVMELMPVGLR). The chain crosses the membrane as a helical span at residues 368-390 (GLMIAVMMPALMSSLSSIFNSSS). Over 391-410 (TLFTMDIWRRLRPCASEREL) the chain is Cytoplasmic. Residues 411-431 (LLVGRLVIVVLIGVSVAWIPV) form a helical membrane-spanning segment. Topologically, residues 432–444 (LQGSNGGQLFIYM) are extracellular. The chain crosses the membrane as a helical span at residues 445-465 (QSVTSSLAPPVTAVFTLGIFW). Over 466–472 (QRANEQG) the chain is Cytoplasmic. Residues 473–493 (AFWGLLAGLAVGATRLVLEFL) traverse the membrane as a helical segment. At 494 to 514 (HPAPPCGAADTRPAVLSQLHY) the chain is on the extracellular side. Residues 515–535 (LHFAVALFVLTGAVAVGGSLL) form a helical membrane-spanning segment. Over 536 to 576 (TPPPRRHQIENLTWWTLTRDLSLGAKAGDGQTPQRYTFWAR) the chain is Cytoplasmic. The helical transmembrane segment at 577 to 597 (VCGFNAILLMCVNIFFYAYFA) threads the bilayer.

This sequence belongs to the sodium:solute symporter (SSF) (TC 2.A.21) family. As to expression, expressed only in kidney.

It localises to the apical cell membrane. It carries out the reaction D-mannose(out) + Na(+)(out) = D-mannose(in) + Na(+)(in). It catalyses the reaction D-fructopyranose(out) + Na(+)(out) = D-fructopyranose(in) + Na(+)(in). Its function is as follows. Electrogenic Na+-coupled sugar symporter that actively transports D-mannose or D-fructose at the plasma membrane, with a Na+ to sugar coupling ratio of 1:1. Transporter activity is driven by a transmembrane Na+ electrochemical gradient set by the Na+/K+ pump. Exclusively recognizes sugar substrates having a pyranose ring with an axial hydroxyl group on carbon 2. Has likely evolved to enable renal reabsorption of D-mannose, an important constituent of oligosaccharide chains of glycoproteins. Contributes to dietary D-fructose reabsorption from glomerular filtrate across the brush border of the kidney. This chain is Sodium/mannose cotransporter SLC5A10 (SLC5A10), found in Oryctolagus cuniculus (Rabbit).